We begin with the raw amino-acid sequence, 508 residues long: Probable monogalactosyldiacylglycerol synthase 3, chloroplastic (508 aa).

Residues 1–60 constitute a chloroplast transit peptide; sequence MAASSSSSSSMASPRGRSIRETVLETVAAYHQQQRMRRKFRKSLSYAGELSSAGRARGEG. The segment at 51 to 79 is disordered; the sequence is SSAGRARGEGGASSSASTTSLCGPDEDDE.

Belongs to the glycosyltransferase 28 family.

It localises to the plastid. Its subcellular location is the chloroplast membrane. The enzyme catalyses a 1,2-diacyl-sn-glycerol + UDP-alpha-D-galactose = a 1,2-diacyl-3-O-(beta-D-galactosyl)-sn-glycerol + UDP + H(+). Functionally, involved in the synthesis of the major structural component of photosynthetic membranes. This Oryza sativa subsp. japonica (Rice) protein is Probable monogalactosyldiacylglycerol synthase 3, chloroplastic (MGD3).